We begin with the raw amino-acid sequence, 162 residues long: Transcription antitermination protein NusB (162 aa).

It belongs to the NusB family.

Involved in transcription antitermination. Required for transcription of ribosomal RNA (rRNA) genes. Binds specifically to the boxA antiterminator sequence of the ribosomal RNA (rrn) operons. The polypeptide is Transcription antitermination protein NusB (Xanthomonas euvesicatoria pv. vesicatoria (strain 85-10) (Xanthomonas campestris pv. vesicatoria)).